A 504-amino-acid chain; its full sequence is Deoxyguanosinetriphosphate triphosphohydrolase (504 aa).

Positions 66-273 constitute an HD domain; the sequence is RLTHSMEVQQ…MEAADDISYC (208 aa).

This sequence belongs to the dGTPase family. Type 1 subfamily. Homotetramer. It depends on Mg(2+) as a cofactor.

The catalysed reaction is dGTP + H2O = 2'-deoxyguanosine + triphosphate + H(+). DGTPase preferentially hydrolyzes dGTP over the other canonical NTPs. This is Deoxyguanosinetriphosphate triphosphohydrolase from Enterobacter sp. (strain 638).